The following is a 665-amino-acid chain: Auxin response factor 1 (665 aa).

Residues 124–226 constitute a DNA-binding region (TF-B3); the sequence is FCKTLTASDT…ELRVGVRRHM (103 aa). Disordered stretches follow at residues 356-408, 496-542, and 645-665; these read VANS…SVPL, PVPS…RQIR, and KADA…AGSR. Composition is skewed to polar residues over residues 497–519, 530–542, and 651–665; these read VPSN…SDIP, LRSP…RQIR, and NGNT…AGSR. Residues 542–635 form the PB1 domain; the sequence is RSCTKVHMQG…EVKKLSPKNK (94 aa).

The protein belongs to the ARF family. As to quaternary structure, homodimers and heterodimers. Interacts with the auxin-responsive proteins IAA12, IAA13, IAA17 and with ARF2. Binds to RIN13 in the nucleus. As to expression, expressed in the whole plant.

Its subcellular location is the nucleus. It is found in the cytoplasm. Auxin response factors (ARFs) are transcriptional factors that bind specifically to the DNA sequence 5'-TGTCTC-3' found in the auxin-responsive promoter elements (AuxREs). Seems to act as transcriptional repressor. Formation of heterodimers with Aux/IAA proteins may alter their ability to modulate early auxin response genes expression. Promotes flowering, stamen development, floral organ abscission and fruit dehiscence. Acts as a repressor of IAA2, IAA3 and IAA7. Together with RIN13, promotes leaf senescence and cell death. The protein is Auxin response factor 1 of Arabidopsis thaliana (Mouse-ear cress).